Consider the following 231-residue polypeptide: Putative N-acetylmannosamine-6-phosphate 2-epimerase (231 aa).

This sequence belongs to the NanE family.

It catalyses the reaction an N-acyl-D-glucosamine 6-phosphate = an N-acyl-D-mannosamine 6-phosphate. Its pathway is amino-sugar metabolism; N-acetylneuraminate degradation; D-fructose 6-phosphate from N-acetylneuraminate: step 3/5. In terms of biological role, converts N-acetylmannosamine-6-phosphate (ManNAc-6-P) to N-acetylglucosamine-6-phosphate (GlcNAc-6-P). The chain is Putative N-acetylmannosamine-6-phosphate 2-epimerase from Listeria monocytogenes serotype 4b (strain F2365).